Consider the following 104-residue polypeptide: uncharacterized protein (104 aa).

2 helical membrane-spanning segments follow: residues 45 to 65 (LYGIFSCFLLFYSLKDLIGVF) and 70 to 90 (LYLSILLLWLLVLLFCLAKGL).

The protein resides in the membrane. This is an uncharacterized protein from Saccharomyces cerevisiae (strain ATCC 204508 / S288c) (Baker's yeast).